Here is a 95-residue protein sequence, read N- to C-terminus: Small ribosomal subunit protein bS6 (95 aa).

This sequence belongs to the bacterial ribosomal protein bS6 family.

Functionally, binds together with bS18 to 16S ribosomal RNA. The polypeptide is Small ribosomal subunit protein bS6 (Clostridium beijerinckii (strain ATCC 51743 / NCIMB 8052) (Clostridium acetobutylicum)).